Here is a 103-residue protein sequence, read N- to C-terminus: uncharacterized protein (103 aa).

This is an uncharacterized protein from Mycoplasma pneumoniae (strain ATCC 29342 / M129 / Subtype 1) (Mycoplasmoides pneumoniae).